The primary structure comprises 342 residues: tRNA dimethylallyltransferase (342 aa).

Residue 39 to 46 (GPTGSGKT) participates in ATP binding. Position 41-46 (41-46 (TGSGKT)) interacts with substrate. Residues 64 to 67 (DSMQ) are interaction with substrate tRNA.

This sequence belongs to the IPP transferase family. In terms of assembly, monomer. It depends on Mg(2+) as a cofactor.

It carries out the reaction adenosine(37) in tRNA + dimethylallyl diphosphate = N(6)-dimethylallyladenosine(37) in tRNA + diphosphate. In terms of biological role, catalyzes the transfer of a dimethylallyl group onto the adenine at position 37 in tRNAs that read codons beginning with uridine, leading to the formation of N6-(dimethylallyl)adenosine (i(6)A). In Chlamydia abortus (strain DSM 27085 / S26/3) (Chlamydophila abortus), this protein is tRNA dimethylallyltransferase.